Here is a 408-residue protein sequence, read N- to C-terminus: Dihydrolipoyllysine-residue acetyltransferase component of pyruvate dehydrogenase complex (408 aa).

Positions 2–78 constitute a Lipoyl-binding domain; that stretch reads PIKILMPALS…PVNSLIAVLS (77 aa). K43 is modified (N6-lipoyllysine). Residues 128-165 enclose the Peripheral subunit-binding (PSBD) domain; the sequence is FASPLAKRLAKIGDIRLENVQGSGPHGRIVKQDILSYD. Residue H381 is part of the active site.

This sequence belongs to the 2-oxoacid dehydrogenase family. In terms of assembly, forms a 24-polypeptide structural core with octahedral symmetry. Requires (R)-lipoate as cofactor.

It catalyses the reaction N(6)-[(R)-dihydrolipoyl]-L-lysyl-[protein] + acetyl-CoA = N(6)-[(R)-S(8)-acetyldihydrolipoyl]-L-lysyl-[protein] + CoA. Its function is as follows. The pyruvate dehydrogenase complex catalyzes the overall conversion of pyruvate to acetyl-CoA and CO(2). It contains multiple copies of three enzymatic components: pyruvate dehydrogenase (E1), dihydrolipoamide acetyltransferase (E2) and lipoamide dehydrogenase (E3). The sequence is that of Dihydrolipoyllysine-residue acetyltransferase component of pyruvate dehydrogenase complex (pdhC) from Rickettsia prowazekii (strain Madrid E).